We begin with the raw amino-acid sequence, 69 residues long: Large ribosomal subunit protein uL29 (69 aa).

It belongs to the universal ribosomal protein uL29 family.

The chain is Large ribosomal subunit protein uL29 from Rhodopseudomonas palustris (strain TIE-1).